Here is a 252-residue protein sequence, read N- to C-terminus: N-acetylglucosaminyl-phosphatidylinositol de-N-acetylase (252 aa).

A helical membrane pass occupies residues 2-22 (ELVGFLCVAVAVLTWGFLRVW). Topologically, residues 23 to 252 (NSAERMRSPE…YMRINSLRFL (230 aa)) are cytoplasmic.

The protein belongs to the PIGL family.

The protein localises to the endoplasmic reticulum membrane. It catalyses the reaction a 6-(N-acetyl-alpha-D-glucosaminyl)-1-(1,2-diacyl-sn-glycero-3-phospho)-1D-myo-inositol + H2O = a 6-(alpha-D-glucosaminyl)-1-(1,2-diacyl-sn-glycero-3-phospho)-1D-myo-inositol + acetate. It functions in the pathway glycolipid biosynthesis; glycosylphosphatidylinositol-anchor biosynthesis. Its function is as follows. Catalyzes the second step of glycosylphosphatidylinositol (GPI) biosynthesis, which is the de-N-acetylation of N-acetylglucosaminyl-phosphatidylinositol. This is N-acetylglucosaminyl-phosphatidylinositol de-N-acetylase (Pigl) from Mus musculus (Mouse).